Consider the following 176-residue polypeptide: Ribosome rescue factor SmrB (176 aa).

Residues 93–168 (LDLHGYRQSE…GDAALLVLID (76 aa)) form the Smr domain.

The protein belongs to the SmrB family. Associates with collided ribosomes, but not with correctly translating polysomes.

Functionally, acts as a ribosome collision sensor. Detects stalled/collided disomes (pairs of ribosomes where the leading ribosome is stalled and a second ribosome has collided with it) and endonucleolytically cleaves mRNA at the 5' boundary of the stalled ribosome. Stalled/collided disomes form a new interface (primarily via the 30S subunits) that binds SmrB. Cleaved mRNA becomes available for tmRNA ligation, leading to ribosomal subunit dissociation and rescue of stalled ribosomes. The sequence is that of Ribosome rescue factor SmrB from Shewanella baltica (strain OS195).